The chain runs to 401 residues: L-rhamnonate dehydratase (401 aa).

Residues His-29 and Arg-55 each coordinate substrate. Asp-222, Glu-248, and Glu-276 together coordinate Mg(2+). The active-site Proton acceptor is His-325. Substrate is bound at residue Glu-345.

This sequence belongs to the mandelate racemase/muconate lactonizing enzyme family. RhamD subfamily. As to quaternary structure, homooctamer; tetramer of dimers. Mg(2+) is required as a cofactor.

The enzyme catalyses L-rhamnonate = 2-dehydro-3-deoxy-L-rhamnonate + H2O. Its function is as follows. Catalyzes the dehydration of L-rhamnonate to 2-keto-3-deoxy-L-rhamnonate (KDR). The polypeptide is L-rhamnonate dehydratase (Klebsiella pneumoniae (strain 342)).